The following is an 876-amino-acid chain: AP-5 complex subunit beta-1 (876 aa).

In terms of assembly, probably part of the adaptor protein complex 5 (AP-5), a tetramer composed of AP5B1, AP5M1, AP5S1 and AP5Z1. Interacts with ZFYVE26 and SPG11.

As part of AP-5, a probable fifth adaptor protein complex it may be involved in endosomal transport. This Mus musculus (Mouse) protein is AP-5 complex subunit beta-1 (Ap5b1).